The primary structure comprises 278 residues: Neuronal membrane glycoprotein M6-a (278 aa).

Methionine 1 is modified (N-acetylmethionine). At 1–22 (MEENMEEGQTQKGCFECCIKCL) the chain is on the cytoplasmic side. The helical transmembrane segment at 23–43 (GGIPYASLIATILLYAGVALF) threads the bilayer. At 44–84 (CGCGHEALSGTVNILQTYFEMARTAGDTLDVFTMIDIFKYV) the chain is on the extracellular side. A helical membrane pass occupies residues 85-105 (IYGIAAAFFVYGILLMVEGFF). Residues 106-127 (TTGAIKDLYGDFKITTCGRCVS) are Cytoplasmic-facing. A helical transmembrane segment spans residues 128–148 (AWFIMLTYLFMLAWLGVTAFT). The Extracellular segment spans residues 149–213 (SLPVYMYFNL…STELNMTFHL (65 aa)). Asparagine 164 carries N-linked (GlcNAc...) asparagine glycosylation. Cysteines 174 and 192 form a disulfide. Asparagine 208 is a glycosylation site (N-linked (GlcNAc...) asparagine). The helical transmembrane segment at 214 to 234 (FIVALAGAGAAVIAMVHYLMV) threads the bilayer. Over 235 to 278 (LSANWAYVKDACRMQKYEDIKSKEEQELHDIHSTRSKERLNAYT) the chain is Cytoplasmic. A Phosphoserine modification is found at serine 256. Phosphothreonine is present on threonine 278.

Belongs to the myelin proteolipid protein family. In terms of assembly, interacts with OPRM1. Interacts with palmitoyltransferase ZDHHC17/HIP14; the interaction leads to palmitoylation of GPM6A. N-glycosylated. Post-translationally, palmitoylated by ZDHHC17/HIP14.

Its subcellular location is the cell membrane. It is found in the cell projection. It localises to the axon. The protein resides in the growth cone. The protein localises to the dendritic spine. Its subcellular location is the filopodium. It is found in the neuron projection. Functionally, involved in neuronal differentiation, including differentiation and migration of neuronal stem cells. Plays a role in neuronal plasticity and is involved in neurite and filopodia outgrowth, filopodia motility and probably synapse formation. GPM6A-induced filopodia formation involves mitogen-activated protein kinase (MAPK) and Src signaling pathways. May be involved in neuronal NGF-dependent Ca(2+) influx. May be involved in regulation of endocytosis and intracellular trafficking of G-protein-coupled receptors (GPCRs); may enhance internalization and recycling of mu-type opioid receptor. This chain is Neuronal membrane glycoprotein M6-a (GPM6A), found in Bos taurus (Bovine).